The primary structure comprises 561 residues: Urocanate hydratase (561 aa).

Residues 52–53 (GG), Gln130, 176–178 (GMG), Glu196, Arg201, 242–243 (NA), 263–267 (QTSAH), 273–274 (YL), and Tyr322 contribute to the NAD(+) site. Residue Cys410 is part of the active site. Gly492 contributes to the NAD(+) binding site.

Belongs to the urocanase family. Requires NAD(+) as cofactor.

The protein resides in the cytoplasm. The catalysed reaction is 4-imidazolone-5-propanoate = trans-urocanate + H2O. It participates in amino-acid degradation; L-histidine degradation into L-glutamate; N-formimidoyl-L-glutamate from L-histidine: step 2/3. In terms of biological role, catalyzes the conversion of urocanate to 4-imidazolone-5-propionate. This chain is Urocanate hydratase, found in Salmonella gallinarum (strain 287/91 / NCTC 13346).